Here is an 82-residue protein sequence, read N- to C-terminus: Turripeptide Gdm9.1 (82 aa).

Positions 1 to 23 (MMAKLMITVMMVLLLSLQQGADG) are cleaved as a signal peptide. A propeptide spanning residues 24–46 (RSERWRKNQMAASRIMRNLITAR) is cleaved from the precursor. Pro49 and Pro50 each carry 4-hydroxyproline. Intrachain disulfides connect Cys53/Cys68, Cys58/Cys72, and Cys64/Cys79. 4-carboxyglutamate occurs at positions 60 and 63.

The protein belongs to the Pg turripeptide superfamily. As to expression, expressed by the venom duct.

Its subcellular location is the secreted. This chain is Turripeptide Gdm9.1, found in Gemmula diomedea (Gem-turris).